The following is a 190-amino-acid chain: Probable chorismate pyruvate-lyase (190 aa).

Positions 77, 115, and 174 each coordinate substrate.

The protein belongs to the UbiC family.

It localises to the cytoplasm. It catalyses the reaction chorismate = 4-hydroxybenzoate + pyruvate. It functions in the pathway cofactor biosynthesis; ubiquinone biosynthesis. Removes the pyruvyl group from chorismate, with concomitant aromatization of the ring, to provide 4-hydroxybenzoate (4HB) for the ubiquinone pathway. The chain is Probable chorismate pyruvate-lyase from Shewanella sp. (strain MR-4).